A 137-amino-acid chain; its full sequence is Small ribosomal subunit protein uS11A (137 aa).

Position 2 is an N-acetylserine (S2). A disordered region spans residues 117–137 (DVTPVPSDSTRKKGGRRGRRL). The segment covering 128–137 (KKGGRRGRRL) has biased composition (basic residues).

Belongs to the universal ribosomal protein uS11 family. Component of the small ribosomal subunit (SSU). Mature yeast ribosomes consist of a small (40S) and a large (60S) subunit. The 40S small subunit contains 1 molecule of ribosomal RNA (18S rRNA) and 33 different proteins (encoded by 57 genes). The large 60S subunit contains 3 rRNA molecules (25S, 5.8S and 5S rRNA) and 46 different proteins (encoded by 81 genes). uS11 interacts with eS1 forming part of the mRNA exit tunnel. uS11 interacts with snoRNA U3. uS11 interacts with MPP10. Component of the ribosomal small subunit (SSU) processome composed of at least 40 protein subunits and snoRNA U3. Post-translationally, N-terminally acetylated by acetyltransferase NatA.

The protein localises to the cytoplasm. The protein resides in the nucleus. It is found in the nucleolus. Its function is as follows. Component of the ribosome, a large ribonucleoprotein complex responsible for the synthesis of proteins in the cell. The small ribosomal subunit (SSU) binds messenger RNAs (mRNAs) and translates the encoded message by selecting cognate aminoacyl-transfer RNA (tRNA) molecules. The large subunit (LSU) contains the ribosomal catalytic site termed the peptidyl transferase center (PTC), which catalyzes the formation of peptide bonds, thereby polymerizing the amino acids delivered by tRNAs into a polypeptide chain. The nascent polypeptides leave the ribosome through a tunnel in the LSU and interact with protein factors that function in enzymatic processing, targeting, and the membrane insertion of nascent chains at the exit of the ribosomal tunnel. uS11 is involved in nucleolar processing of pre-18S ribosomal RNA and ribosome assembly. In Saccharomyces cerevisiae (strain ATCC 204508 / S288c) (Baker's yeast), this protein is Small ribosomal subunit protein uS11A.